Consider the following 295-residue polypeptide: MAPSNLPPVFNATSQDIEMLLAAQCHLGSKNLQVHMEPYLWKTRPDGINVINIGKTWEKIVLAARIIAAIDNPADICVISARPYGQRAVLKFAAHTGAVAIAGRFTPGNFTNYITRSFKEPRLIIVTDPRTDSQAIKEASYVNIPVIALCDTDSPTEFVDVAIPTNNKGRHAIGLIWWMLAREVLRLRGTLANRESEWDVVVDLYFYRDPEAEENKEIEETKVPGAEEVGAAAIESGLVGDSWQAQATPGFSAGVAVPGTAVPGWEADVSTDWAASSAPAAETLADPAADPSVKW.

Belongs to the universal ribosomal protein uS2 family. Component of the small ribosomal subunit. Mature ribosomes consist of a small (40S) and a large (60S) subunit. The 40S subunit contains about 33 different proteins and 1 molecule of RNA (18S). The 60S subunit contains about 49 different proteins and 3 molecules of RNA (25S, 5.8S and 5S). Interacts with RPS21.

It localises to the cytoplasm. Functionally, required for the assembly and/or stability of the 40S ribosomal subunit. Required for the processing of the 20S rRNA-precursor to mature 18S rRNA in a late step of the maturation of 40S ribosomal subunits. The sequence is that of Small ribosomal subunit protein uS2 from Paracoccidioides brasiliensis (strain Pb03).